The chain runs to 219 residues: NAD(P)H-quinone oxidoreductase subunit K 2 (219 aa).

Positions 53, 54, 118, and 149 each coordinate [4Fe-4S] cluster.

It belongs to the complex I 20 kDa subunit family. In terms of assembly, NDH-1 can be composed of about 15 different subunits; different subcomplexes with different compositions have been identified which probably have different functions. [4Fe-4S] cluster is required as a cofactor.

The protein resides in the cellular thylakoid membrane. The catalysed reaction is a plastoquinone + NADH + (n+1) H(+)(in) = a plastoquinol + NAD(+) + n H(+)(out). The enzyme catalyses a plastoquinone + NADPH + (n+1) H(+)(in) = a plastoquinol + NADP(+) + n H(+)(out). Its function is as follows. NDH-1 shuttles electrons from an unknown electron donor, via FMN and iron-sulfur (Fe-S) centers, to quinones in the respiratory and/or the photosynthetic chain. The immediate electron acceptor for the enzyme in this species is believed to be plastoquinone. Couples the redox reaction to proton translocation, and thus conserves the redox energy in a proton gradient. Cyanobacterial NDH-1 also plays a role in inorganic carbon-concentration. In Synechocystis sp. (strain ATCC 27184 / PCC 6803 / Kazusa), this protein is NAD(P)H-quinone oxidoreductase subunit K 2.